Here is a 174-residue protein sequence, read N- to C-terminus: Recombination protein RecR (174 aa).

The C4-type zinc finger occupies 30–45; sequence CNACRTFTEEEECTIC. The region spanning 54 to 149 is the Toprim domain; it reads GQLCIVEMPE…KVTRIAHGIP (96 aa).

The protein belongs to the RecR family.

Functionally, may play a role in DNA repair. It seems to be involved in an RecBC-independent recombinational process of DNA repair. It may act with RecF and RecO. This chain is Recombination protein RecR, found in Haemophilus ducreyi (strain 35000HP / ATCC 700724).